The sequence spans 124 residues: Large ribosomal subunit protein uL22 (124 aa).

It belongs to the universal ribosomal protein uL22 family. Part of the 50S ribosomal subunit.

In terms of biological role, this protein binds specifically to 23S rRNA; its binding is stimulated by other ribosomal proteins, e.g. L4, L17, and L20. It is important during the early stages of 50S assembly. It makes multiple contacts with different domains of the 23S rRNA in the assembled 50S subunit and ribosome. Its function is as follows. The globular domain of the protein is located near the polypeptide exit tunnel on the outside of the subunit, while an extended beta-hairpin is found that lines the wall of the exit tunnel in the center of the 70S ribosome. The polypeptide is Large ribosomal subunit protein uL22 (Treponema pallidum (strain Nichols)).